The following is an 838-amino-acid chain: Ribonucleoside-diphosphate reductase large subunit (838 aa).

One can recognise an ATP-cone domain in the interval 6–97; it reads KLVTKRDGSV…VTALHKTTTE (92 aa). ATP-binding positions include 10–11, 16–22, T58, and D62; these read KR and EPYDEKV. S227 serves as a coordination point for GDP. C228 and C454 are joined by a disulfide. DTTP-binding positions include 236–238, K253, R266, and 273–274; these read DSI and AG. Position 437 (N437) interacts with GDP. The active-site Proton acceptor is the N437. C439 serves as the catalytic Cysteine radical intermediate. GDP contacts are provided by residues E441 and 626 to 629; that span reads TAST. Catalysis depends on E441, which acts as the Proton acceptor. Residues 780-794 are compositionally biased toward basic and acidic residues; sequence KELPKPDKQSKEEVH. Positions 780 to 838 are disordered; the sequence is KELPKPDKQSKEEVHGSVGRGKRKRVGEKPTANHSNAGAPNLNGPPDTDGDGGCLNCGS.

This sequence belongs to the ribonucleoside diphosphate reductase large chain family. Heterodimer of a large and a small subunit.

The catalysed reaction is a 2'-deoxyribonucleoside 5'-diphosphate + [thioredoxin]-disulfide + H2O = a ribonucleoside 5'-diphosphate + [thioredoxin]-dithiol. It catalyses the reaction dCDP + [thioredoxin]-disulfide + H2O = CDP + [thioredoxin]-dithiol. Its activity is regulated as follows. Under complex allosteric control mediated by deoxynucleoside triphosphates and ATP binding to separate specificity and activation sites on the large subunit. The type of nucleotide bound at the specificity site determines substrate preference. It seems probable that ATP makes the enzyme reduce CDP and UDP, dGTP favors ADP reduction and dTTP favors GDP reduction. Stimulated by ATP and inhibited by dATP binding to the activity site. Provides the precursors necessary for DNA synthesis. Catalyzes the rate limiting step in the de novo synthesis of deoxyribonucleotides by directly reducing ribonucleotides to the corresponding deoxyribonucleotides. In Trypanosoma brucei brucei, this protein is Ribonucleoside-diphosphate reductase large subunit (RNR1).